A 258-amino-acid chain; its full sequence is Imidazole glycerol phosphate synthase subunit HisF (258 aa).

Catalysis depends on residues Asp11 and Asp130.

The protein belongs to the HisA/HisF family. In terms of assembly, heterodimer of HisH and HisF.

The protein localises to the cytoplasm. It catalyses the reaction 5-[(5-phospho-1-deoxy-D-ribulos-1-ylimino)methylamino]-1-(5-phospho-beta-D-ribosyl)imidazole-4-carboxamide + L-glutamine = D-erythro-1-(imidazol-4-yl)glycerol 3-phosphate + 5-amino-1-(5-phospho-beta-D-ribosyl)imidazole-4-carboxamide + L-glutamate + H(+). Its pathway is amino-acid biosynthesis; L-histidine biosynthesis; L-histidine from 5-phospho-alpha-D-ribose 1-diphosphate: step 5/9. IGPS catalyzes the conversion of PRFAR and glutamine to IGP, AICAR and glutamate. The HisF subunit catalyzes the cyclization activity that produces IGP and AICAR from PRFAR using the ammonia provided by the HisH subunit. The protein is Imidazole glycerol phosphate synthase subunit HisF of Stenotrophomonas maltophilia (strain R551-3).